The primary structure comprises 360 residues: UDP-N-acetylglucosamine--N-acetylmuramyl-(pentapeptide) pyrophosphoryl-undecaprenol N-acetylglucosamine transferase (360 aa).

UDP-N-acetyl-alpha-D-glucosamine is bound by residues 12–14, S198, and Q289; that span reads TAG.

The protein belongs to the glycosyltransferase 28 family. MurG subfamily.

The protein localises to the cell membrane. It carries out the reaction Mur2Ac(oyl-L-Ala-gamma-D-Glu-L-Lys-D-Ala-D-Ala)-di-trans,octa-cis-undecaprenyl diphosphate + UDP-N-acetyl-alpha-D-glucosamine = beta-D-GlcNAc-(1-&gt;4)-Mur2Ac(oyl-L-Ala-gamma-D-Glu-L-Lys-D-Ala-D-Ala)-di-trans,octa-cis-undecaprenyl diphosphate + UDP + H(+). The protein operates within cell wall biogenesis; peptidoglycan biosynthesis. In terms of biological role, cell wall formation. Catalyzes the transfer of a GlcNAc subunit on undecaprenyl-pyrophosphoryl-MurNAc-pentapeptide (lipid intermediate I) to form undecaprenyl-pyrophosphoryl-MurNAc-(pentapeptide)GlcNAc (lipid intermediate II). This is UDP-N-acetylglucosamine--N-acetylmuramyl-(pentapeptide) pyrophosphoryl-undecaprenol N-acetylglucosamine transferase from Streptococcus equi subsp. zooepidemicus (strain H70).